The chain runs to 531 residues: SWI/SNF-related matrix-associated actin-dependent regulator of chromatin subfamily D member 2 (531 aa).

Asymmetric dimethylarginine occurs at positions 81 and 104. A Phosphoserine modification is found at serine 203. Positions 205 to 226 (SKAEGDSAGTAGTPGGTPAGDK) are disordered. Phosphothreonine is present on threonine 217. Residue lysine 226 forms a Glycyl lysine isopeptide (Lys-Gly) (interchain with G-Cter in SUMO2) linkage. The SWIB/MDM2 domain occupies 306–383 (HQPPQYKLDP…PMKLAGLLQH (78 aa)).

This sequence belongs to the SMARCD family. Component of the multiprotein chromatin-remodeling complexes SWI/SNF: SWI/SNF-A (BAF), SWI/SNF-B (PBAF) and related complexes. The canonical complex contains a catalytic subunit (either SMARCA4/BRG1/BAF190A or SMARCA2/BRM/BAF190B), and at least SMARCE1, ACTL6A/BAF53, SMARCC1/BAF155, SMARCC2/BAF170, and SMARCB1/SNF5/BAF47. Other subunits specific to each of the complexes may also be present permitting several possible combinations developmentally and tissue specific. Component of the BAF complex, which includes at least actin (ACTB), ARID1A/BAF250A, ARID1B/BAF250B, SMARCA2/BRM, SMARCA4/BRG1, ACTL6A/BAF53, ACTL6B/BAF53B, SMARCE1/BAF57, SMARCC1/BAF155, SMARCC2/BAF170, SMARCB1/SNF5/INI1, and one or more SMARCD1/BAF60A, SMARCD2/BAF60B, or SMARCD3/BAF60C. In muscle cells, the BAF complex also contains DPF3. Component of the SWI/SNF-B (PBAF) chromatin remodeling complex, at least composed of SMARCA4/BRG1, SMARCB1/BAF47/SNF5, ACTL6A/BAF53A or ACTL6B/BAF53B, SMARCE1/BAF57, SMARCD1/BAF60A, SMARCD2/BAF60B, perhaps SMARCD3/BAF60C, SMARCC1/BAF155, SMARCC2/BAF170, PBRM1/BAF180, ARID2/BAF200 and actin (ACTB). Interacts with UNKL. Interacts with CEBPE. In terms of processing, ubiquitinated through a signaling process involving RAC1 and the RING finger protein UNKL. In terms of tissue distribution, isoform 2 is expressed in the pancreas.

Its subcellular location is the nucleus. Its function is as follows. Involved in transcriptional activation and repression of select genes by chromatin remodeling (alteration of DNA-nucleosome topology). Component of SWI/SNF chromatin remodeling complexes that carry out key enzymatic activities, changing chromatin structure by altering DNA-histone contacts within a nucleosome in an ATP-dependent manner. Critical regulator of myeloid differentiation, controlling granulocytopoiesis and the expression of genes involved in neutrophil granule formation. The sequence is that of SWI/SNF-related matrix-associated actin-dependent regulator of chromatin subfamily D member 2 (SMARCD2) from Homo sapiens (Human).